Here is a 59-residue protein sequence, read N- to C-terminus: Putative potassium channel toxin Ts25 (59 aa).

Positions 1-22 are cleaved as a signal peptide; sequence MKAFYGILIIFILISMIHLSQQ. Cystine bridges form between C29/C50, C35/C55, and C39/C57.

Belongs to the short scorpion toxin superfamily. Potassium channel inhibitor family. Alpha-KTx 04 subfamily. In terms of tissue distribution, expressed by the venom gland.

It is found in the secreted. Potently blocks Kv1.1/KCNA1 (85%), Kv1.2/KCNA2 (91%), Kv1.3/KCNA3 (89%), Kv1.6/KCNA6 (94%), and Shaker (97%). This chain is Putative potassium channel toxin Ts25, found in Tityus serrulatus (Brazilian scorpion).